The primary structure comprises 380 residues: Glucose-1-phosphate adenylyltransferase (380 aa).

Alpha-D-glucose 1-phosphate-binding positions include Gly164, 179 to 180, and Ser190; that span reads EK.

This sequence belongs to the bacterial/plant glucose-1-phosphate adenylyltransferase family. Homotetramer.

It carries out the reaction alpha-D-glucose 1-phosphate + ATP + H(+) = ADP-alpha-D-glucose + diphosphate. It participates in glycan biosynthesis; glycogen biosynthesis. Its function is as follows. Involved in the biosynthesis of ADP-glucose, a building block required for the elongation reactions to produce glycogen. Catalyzes the reaction between ATP and alpha-D-glucose 1-phosphate (G1P) to produce pyrophosphate and ADP-Glc. This chain is Glucose-1-phosphate adenylyltransferase, found in Ligilactobacillus salivarius (strain UCC118) (Lactobacillus salivarius).